The primary structure comprises 458 residues: Argininosuccinate lyase (458 aa).

Belongs to the lyase 1 family. Argininosuccinate lyase subfamily.

The protein localises to the cytoplasm. The catalysed reaction is 2-(N(omega)-L-arginino)succinate = fumarate + L-arginine. It participates in amino-acid biosynthesis; L-arginine biosynthesis; L-arginine from L-ornithine and carbamoyl phosphate: step 3/3. The protein is Argininosuccinate lyase of Citrifermentans bemidjiense (strain ATCC BAA-1014 / DSM 16622 / JCM 12645 / Bem) (Geobacter bemidjiensis).